The chain runs to 486 residues: 2-hydroxymuconic semialdehyde dehydrogenase (486 aa).

Catalysis depends on residues E254 and C288.

Belongs to the aldehyde dehydrogenase family. As to quaternary structure, homodimer.

It catalyses the reaction (2Z,4E)-2-hydroxy-6-oxohexa-2,4-dienoate + NAD(+) + H2O = (2Z,4E)-2-hydroxyhexa-2,4-dienedioate + NADH + 2 H(+). It participates in aromatic compound metabolism; benzoate degradation via hydroxylation. Its function is as follows. 2-hydroxymuconic acid semialdehyde can be converted to 2-hydroxypent-2,4-dienoate either directly by the action of 2-hydroxymuconic semialdehyde hydrolase (HMSH) or by the action of three sequential enzymes, the first of which is HMSD. Can oxidize not only 2-hydroxymuconic semialdehyde and its analogs but also benzaldehyde and its analogs. The polypeptide is 2-hydroxymuconic semialdehyde dehydrogenase (xylG) (Pseudomonas putida (Arthrobacter siderocapsulatus)).